Consider the following 86-residue polypeptide: SEED MATURATION PROTEIN 1 (86 aa).

The interval 52–86 is disordered; the sequence is RIEKGKEQSAASGDQTQIQRDIKDIKGTRTDDSPR. Residues 60–70 show a composition bias toward polar residues; the sequence is SAASGDQTQIQ. Basic and acidic residues predominate over residues 71 to 86; that stretch reads RDIKDIKGTRTDDSPR.

This sequence belongs to the LEA type 3 family.

Functionally, protein chaperone involved in seed maturation and dormancy maintenance after high temperature fluctuation (e.g. secondary dormancy after 3 days at 40 degrees Celsius), probably by protecting heat labile proteins required for secondary dormancy (e.g. G6PDH, HOP3, SR45, ECP63, SCL33, RPL32B, ChlADR1, MSBP1, MBF1B, At3g01690, At1g15280, At1g15290, At2g31410, At1g11630, At1g65090, EMB2279, EMB1674 and RPL35C). This chain is SEED MATURATION PROTEIN 1, found in Arabidopsis thaliana (Mouse-ear cress).